The primary structure comprises 390 residues: Dual-specificity RNA methyltransferase RlmN (390 aa).

Glu126 (proton acceptor) is an active-site residue. Residues 134–374 (TEDRGAVCLS…APVRTPRGQD (241 aa)) form the Radical SAM core domain. Cys141 and Cys379 are joined by a disulfide. Residues Cys148, Cys152, and Cys155 each contribute to the [4Fe-4S] cluster site. Residues 205–206 (GE), Ser237, 259–261 (SLH), and Asn336 contribute to the S-adenosyl-L-methionine site. The S-methylcysteine intermediate role is filled by Cys379.

It belongs to the radical SAM superfamily. RlmN family. It depends on [4Fe-4S] cluster as a cofactor.

Its subcellular location is the cytoplasm. The catalysed reaction is adenosine(2503) in 23S rRNA + 2 reduced [2Fe-2S]-[ferredoxin] + 2 S-adenosyl-L-methionine = 2-methyladenosine(2503) in 23S rRNA + 5'-deoxyadenosine + L-methionine + 2 oxidized [2Fe-2S]-[ferredoxin] + S-adenosyl-L-homocysteine. The enzyme catalyses adenosine(37) in tRNA + 2 reduced [2Fe-2S]-[ferredoxin] + 2 S-adenosyl-L-methionine = 2-methyladenosine(37) in tRNA + 5'-deoxyadenosine + L-methionine + 2 oxidized [2Fe-2S]-[ferredoxin] + S-adenosyl-L-homocysteine. Its function is as follows. Specifically methylates position 2 of adenine 2503 in 23S rRNA and position 2 of adenine 37 in tRNAs. m2A2503 modification seems to play a crucial role in the proofreading step occurring at the peptidyl transferase center and thus would serve to optimize ribosomal fidelity. The protein is Dual-specificity RNA methyltransferase RlmN of Acidiphilium cryptum (strain JF-5).